We begin with the raw amino-acid sequence, 824 residues long: Probable acyl-CoA dehydrogenase IBR3 (824 aa).

Glycine 2 carries the N-acetylglycine modification. FAD is bound by residues 555 to 565, 589 to 591, arginine 706, glutamine 776, and 776 to 780; these read FAMTEPQVASS, WTS, and QVHGA. The Microbody targeting signal motif lies at 822–824; it reads SKL.

It belongs to the acyl-CoA dehydrogenase family. FAD serves as cofactor.

It is found in the peroxisome. The enzyme catalyses a 2,3-saturated acyl-CoA + A = a 2,3-dehydroacyl-CoA + AH2. Functionally, involved with IBR1 and IBR10 in the peroxisomal beta-oxidation of indole-3-butyric acid (IBA) to form indole-3-acetic acid (IAA), a biologically active auxin. May be responsible for catalyzing the first step in IBA-CoA beta-oxidation. May play a role in defense response to pathogenic bacteria. The polypeptide is Probable acyl-CoA dehydrogenase IBR3 (Arabidopsis thaliana (Mouse-ear cress)).